The primary structure comprises 578 residues: Hemolysin 4 (578 aa).

Residues 289 to 322 are disordered; sequence KDGPKASWRRRPSSASSVTMPTTPRIIGSNARPE. Residues 448-539 enclose the Ricin B-type lectin domain; that stretch reads RPVNLQLGGF…LSNLSAHQLL (92 aa).

It belongs to the HlyA hemolysin family.

In terms of biological role, bacterial hemolysins are exotoxins that attack blood cell membranes and cause cell rupture by mechanisms not clearly defined. The protein is Hemolysin 4 (ash4) of Aeromonas salmonicida.